The following is a 319-amino-acid chain: Annexin A5 (319 aa).

A2 carries the post-translational modification N-acetylalanine. Annexin repeat units lie at residues 13 to 84 (FDGR…AMMK), 85 to 156 (PSRL…VLLQ), 168 to 240 (AQVE…AVVK), and 244 to 315 (SIPA…LLCG). Residue K27 forms a Glycyl lysine isopeptide (Lys-Gly) (interchain with G-Cter in SUMO1); alternate linkage. A Glycyl lysine isopeptide (Lys-Gly) (interchain with G-Cter in SUMO2); alternate cross-link involves residue K27. S35 is subject to Phosphoserine. An N6-acetyllysine mark is found at K68, K74, K77, K95, and K99. N6-succinyllysine is present on K288. The [IL]-x-C-x-x-[DE] motif signature appears at 312 to 318 (LLCGGED).

It belongs to the annexin family. In terms of assembly, monomer. Binds ATRX and EIF5B. In terms of processing, S-nitrosylation is induced by interferon-gamma and oxidatively-modified low-densitity lipoprotein (LDL(ox)) possibly implicating the iNOS-S100A8/9 transnitrosylase complex.

Functionally, this protein is an anticoagulant protein that acts as an indirect inhibitor of the thromboplastin-specific complex, which is involved in the blood coagulation cascade. This Mus musculus (Mouse) protein is Annexin A5 (Anxa5).